We begin with the raw amino-acid sequence, 242 residues long: ATP-dependent dethiobiotin synthetase BioD (242 aa).

An ATP-binding site is contributed by 12–17; sequence EVGKTV. Thr-16 is a binding site for Mg(2+). Lys-37 is an active-site residue. Ser-41 serves as a coordination point for substrate. Residues Asp-51 and 112–115 each bind ATP; that span reads EGAG. Mg(2+)-binding residues include Asp-51 and Glu-112.

It belongs to the dethiobiotin synthetase family. As to quaternary structure, homodimer. The cofactor is Mg(2+).

It localises to the cytoplasm. It carries out the reaction (7R,8S)-7,8-diammoniononanoate + CO2 + ATP = (4R,5S)-dethiobiotin + ADP + phosphate + 3 H(+). It functions in the pathway cofactor biosynthesis; biotin biosynthesis; biotin from 7,8-diaminononanoate: step 1/2. Functionally, catalyzes a mechanistically unusual reaction, the ATP-dependent insertion of CO2 between the N7 and N8 nitrogen atoms of 7,8-diaminopelargonic acid (DAPA, also called 7,8-diammoniononanoate) to form a ureido ring. The chain is ATP-dependent dethiobiotin synthetase BioD from Bacillus thuringiensis subsp. konkukian (strain 97-27).